Here is a 923-residue protein sequence, read N- to C-terminus: ATP-dependent Clp protease ATP-binding subunit ClpA homolog CD4B, chloroplastic (923 aa).

A Clp R domain is found at 92–234; that stretch reads FERFTEKAIK…RTQVIRMVGE (143 aa). Repeat regions lie at residues 95–160 and 170–234; these read FTEK…IGRG and FTPR…MVGE. Residues 255–502 are i; it reads LEEYGTNLTK…RVRLRHAQLP (248 aa). ATP is bound at residue 300-307; sequence GEPGVGKT. The UVR domain occupies 509-544; sequence EKELRQITKEKNEAVRGQDFEKAGELRDREMDLKAQ. Residues 569 to 760 form an II region; it reads VTEADIQHIV…LLIMTSNVGS (192 aa). 643–650 is a binding site for ATP; the sequence is GPTGVGKS.

This sequence belongs to the ClpA/ClpB family.

The protein localises to the plastid. It is found in the chloroplast. May interact with a ClpP-like protease involved in degradation of denatured proteins in the chloroplast. In Solanum lycopersicum (Tomato), this protein is ATP-dependent Clp protease ATP-binding subunit ClpA homolog CD4B, chloroplastic (CD4B).